Consider the following 299-residue polypeptide: 4-diphosphocytidyl-2-C-methyl-D-erythritol kinase (299 aa).

The active site involves Lys-33. An ATP-binding site is contributed by 115–125 (PLASGLGGGSS). Residue Asp-154 is part of the active site.

Belongs to the GHMP kinase family. IspE subfamily.

The enzyme catalyses 4-CDP-2-C-methyl-D-erythritol + ATP = 4-CDP-2-C-methyl-D-erythritol 2-phosphate + ADP + H(+). The protein operates within isoprenoid biosynthesis; isopentenyl diphosphate biosynthesis via DXP pathway; isopentenyl diphosphate from 1-deoxy-D-xylulose 5-phosphate: step 3/6. Its function is as follows. Catalyzes the phosphorylation of the position 2 hydroxy group of 4-diphosphocytidyl-2C-methyl-D-erythritol. This chain is 4-diphosphocytidyl-2-C-methyl-D-erythritol kinase, found in Deinococcus geothermalis (strain DSM 11300 / CIP 105573 / AG-3a).